We begin with the raw amino-acid sequence, 122 residues long: Large ribosomal subunit protein uL14 (122 aa).

It belongs to the universal ribosomal protein uL14 family. In terms of assembly, part of the 50S ribosomal subunit. Forms a cluster with proteins L3 and L19. In the 70S ribosome, L14 and L19 interact and together make contacts with the 16S rRNA in bridges B5 and B8.

Binds to 23S rRNA. Forms part of two intersubunit bridges in the 70S ribosome. The polypeptide is Large ribosomal subunit protein uL14 (Bacillus pumilus (strain SAFR-032)).